We begin with the raw amino-acid sequence, 181 residues long: Ribulose bisphosphate carboxylase small subunit, chloroplastic 2 (181 aa).

Residues M1–S54 constitute a chloroplast transit peptide.

This sequence belongs to the RuBisCO small chain family. In terms of assembly, heterohexadecamer of 8 large and 8 small subunits.

Its subcellular location is the plastid. The protein localises to the chloroplast. RuBisCO catalyzes two reactions: the carboxylation of D-ribulose 1,5-bisphosphate, the primary event in carbon dioxide fixation, as well as the oxidative fragmentation of the pentose substrate. Both reactions occur simultaneously and in competition at the same active site. Although the small subunit is not catalytic it is essential for maximal activity. This is Ribulose bisphosphate carboxylase small subunit, chloroplastic 2 from Brassica napus (Rape).